The primary structure comprises 143 residues: Peptide methionine sulfoxide reductase B8 (143 aa).

Positions 18 to 139 (DEEWRAVLSP…NSVSLKFASA (122 aa)) constitute a MsrB domain. Residues cysteine 57, cysteine 60, cysteine 103, and cysteine 106 each contribute to the Zn(2+) site. A disulfide bridge links cysteine 75 with cysteine 128. The Nucleophile role is filled by cysteine 128.

Belongs to the MsrB Met sulfoxide reductase family. Zn(2+) is required as a cofactor.

The protein resides in the cytoplasm. It is found in the cytosol. The catalysed reaction is L-methionyl-[protein] + [thioredoxin]-disulfide + H2O = L-methionyl-(R)-S-oxide-[protein] + [thioredoxin]-dithiol. Catalyzes the reduction of methionine sulfoxide (MetSO) to methionine in proteins. Plays a protective role against oxidative stress by restoring activity to proteins that have been inactivated by methionine oxidation. MSRB family specifically reduces the MetSO R-enantiomer. The chain is Peptide methionine sulfoxide reductase B8 (MSRB8) from Arabidopsis thaliana (Mouse-ear cress).